The chain runs to 601 residues: Glutathione-regulated potassium-efflux system protein KefB (601 aa).

Transmembrane regions (helical) follow at residues 5-25, 29-49, 55-75, 87-107, 115-135, 152-172, 177-197, 207-227, 230-250, 261-281, 284-304, 326-346, and 356-376; these read DLLL…PLAA, IGAV…GLGF, EILH…GLEL, IFGV…GLLM, AAVI…LQLM, VLLF…LLAG, HFDW…LIGG, FIAA…LVLG, LFMD…GILL, IAID…VGMA, LGVL…LVAV, FAGV…TAAS, and ALLL…MKLI. An RCK N-terminal domain is found at 400 to 518; that stretch reads KPQVIVVGFG…QAGVTNFSRE (119 aa).

This sequence belongs to the monovalent cation:proton antiporter 2 (CPA2) transporter (TC 2.A.37) family. KefB subfamily. In terms of assembly, interacts with the regulatory subunit KefG.

It localises to the cell inner membrane. Its function is as follows. Pore-forming subunit of a potassium efflux system that confers protection against electrophiles. Catalyzes K(+)/H(+) antiport. The protein is Glutathione-regulated potassium-efflux system protein KefB of Enterobacter sp. (strain 638).